Here is a 218-residue protein sequence, read N- to C-terminus: Octanoyltransferase (218 aa).

The region spanning 31-206 (EETPDEVWLV…ELVNLLGYEQ (176 aa)) is the BPL/LPL catalytic domain. Substrate-binding positions include 70-77 (RGGQVTYH), 137-139 (SLG), and 150-152 (GLA). The Acyl-thioester intermediate role is filled by C168.

This sequence belongs to the LipB family.

Its subcellular location is the cytoplasm. It carries out the reaction octanoyl-[ACP] + L-lysyl-[protein] = N(6)-octanoyl-L-lysyl-[protein] + holo-[ACP] + H(+). Its pathway is protein modification; protein lipoylation via endogenous pathway; protein N(6)-(lipoyl)lysine from octanoyl-[acyl-carrier-protein]: step 1/2. Functionally, catalyzes the transfer of endogenously produced octanoic acid from octanoyl-acyl-carrier-protein onto the lipoyl domains of lipoate-dependent enzymes. Lipoyl-ACP can also act as a substrate although octanoyl-ACP is likely to be the physiological substrate. In Vibrio vulnificus (strain YJ016), this protein is Octanoyltransferase.